Reading from the N-terminus, the 318-residue chain is Homoserine kinase (318 aa).

Position 97–107 (97–107 (PIGSGLGSSAC)) interacts with ATP.

It belongs to the GHMP kinase family. Homoserine kinase subfamily.

It is found in the cytoplasm. It catalyses the reaction L-homoserine + ATP = O-phospho-L-homoserine + ADP + H(+). It functions in the pathway amino-acid biosynthesis; L-threonine biosynthesis; L-threonine from L-aspartate: step 4/5. Its function is as follows. Catalyzes the ATP-dependent phosphorylation of L-homoserine to L-homoserine phosphate. The polypeptide is Homoserine kinase (Vibrio cholerae serotype O1 (strain ATCC 39541 / Classical Ogawa 395 / O395)).